The primary structure comprises 391 residues: Leucine-rich repeat-containing protein 74B (391 aa).

The tract at residues 1-38 (MKGPCEVQKNEDQEGEAAATGPQAETLEAERSWTADSH) is disordered. The span at 28-38 (EAERSWTADSH) shows a compositional bias: basic and acidic residues. LRR repeat units follow at residues 106–126 (YIKRLDLRDNGLCGAGAEALA), 134–154 (IISDVDLSENQIGAAGLQAIC), 162–182 (TVEKMQLQGNRLEEQAAQHLA), 190–211 (GLKSLDLSYNQLNDLAGEILGP), 218–239 (GLTELNLSWNHLRGLGATAFAR), 246–259 (FLKVLDISHNGFGD), 274–294 (VLEELNMRNNRISVSGALKLG), 302–323 (TLRILIISKNPIRSDGCVGLLK), and 332–354 (ALELLDVSDIQVSRECEDLASSM). Residues 371 to 391 (KDWPQASTPSQPASAPSDSGL) form a disordered region. Over residues 374–391 (PQASTPSQPASAPSDSGL) the composition is skewed to low complexity.

This Mus musculus (Mouse) protein is Leucine-rich repeat-containing protein 74B.